Here is a 156-residue protein sequence, read N- to C-terminus: Small ribosomal subunit protein uS7c (156 aa).

It belongs to the universal ribosomal protein uS7 family. Part of the 30S ribosomal subunit.

It is found in the plastid. One of the primary rRNA binding proteins, it binds directly to 16S rRNA where it nucleates assembly of the head domain of the 30S subunit. This Prototheca wickerhamii protein is Small ribosomal subunit protein uS7c (rps7).